Consider the following 249-residue polypeptide: Probable transcriptional regulatory protein Meso_3192 (249 aa).

The protein belongs to the TACO1 family.

It is found in the cytoplasm. The sequence is that of Probable transcriptional regulatory protein Meso_3192 from Chelativorans sp. (strain BNC1).